We begin with the raw amino-acid sequence, 91 residues long: MALVEAVEPIIYGNTKTGISFDSITGAIIAGVVVGLAKTAFLGKFPDYVEVLIGVGLLFMYGQYDLLRGIGFVLTADGIYGLIKNYISTSS.

3 helical membrane passes run 17–37 (TGISFDSITGAIIAGVVVGLA), 40–60 (AFLGKFPDYVEVLIGVGLLFM), and 69–89 (GIGFVLTADGIYGLIKNYIST).

It is found in the host membrane. This chain is Putative transmembrane protein ORF91a, found in Acidianus convivator (ABV).